The chain runs to 431 residues: MADLLWQKPGVAVDAQIQTFLAGDDVILDREFFLHDIAASAAHAQGLQHIGILSADELAGLLRELEILAQDFREGRFVLDTQYEDGHSAIEARLTERLGDAGRKIHTGRSRNDQILVATRLWLKEKLLSVAQLSADVAKVALDRAQAEKDLPIPGYTHIQRAVVSSAGMWWAGWAEAFIDNAIRARDTHALVDANPLGTAAGYGVNLPLDREHTTAALGFARMQISPIYAQLSRGKFELAALEALGGATLDLRRIAWDLSLFTSAEFGFVALPAQYTTGSSIMPNKRNPDVIELMRATHASVAAARTEIEQLLSLPSGYHRDLQSSKGAIFHGFGRGLAALELLPALLANLEWRDDKLRAAIDSGMYATDVAVEAAVAGVPFREAYKAAAAGADSAGQGRTPEGSLAARVSPGSAADLRLDELRARWQALS.

This sequence belongs to the lyase 1 family. Argininosuccinate lyase subfamily.

The protein localises to the cytoplasm. It catalyses the reaction 2-(N(omega)-L-arginino)succinate = fumarate + L-arginine. The protein operates within amino-acid biosynthesis; L-arginine biosynthesis; L-arginine from L-ornithine and carbamoyl phosphate: step 3/3. This chain is Argininosuccinate lyase, found in Stenotrophomonas maltophilia (strain K279a).